The primary structure comprises 964 residues: Integrator complex subunit 4 (964 aa).

K27 is modified (N6-acetyllysine). HEAT repeat units follow at residues 67-106 (AESV…TAGF), 146-184 (QATQ…LEKS), 191-229 (GSAA…RGLK), 230-264 (LHQT…SQLY), 278-314 (IRLV…EQVS), 370-406 (NLIE…AQSS), 407-445 (PSFA…NITL), and 447-485 (EDQL…GIHL). K792 participates in a covalent cross-link: Glycyl lysine isopeptide (Lys-Gly) (interchain with G-Cter in SUMO1); alternate. Residue K792 forms a Glycyl lysine isopeptide (Lys-Gly) (interchain with G-Cter in SUMO2); alternate linkage.

It belongs to the Integrator subunit 4 family. Component of the Integrator complex, composed of core subunits INTS1, INTS2, INTS3, INTS4, INTS5, INTS6, INTS7, INTS8, INTS9/RC74, INTS10, INTS11/CPSF3L, INTS12, INTS13, INTS14 and INTS15. The core complex associates with protein phosphatase 2A subunits PPP2CA and PPP2R1A, to form the Integrator-PP2A (INTAC) complex. INTS4 is part of the RNA endonuclease subcomplex, composed of INTS4, INTS9, INTS11 and inositol hexakisphosphate (InsP6). Interacts with BRAT1; interaction is required for the assembly of the RNA endonuclease subcomplex.

Its subcellular location is the nucleus. The protein localises to the cytoplasm. In terms of biological role, component of the integrator complex, a multiprotein complex that terminates RNA polymerase II (Pol II) transcription in the promoter-proximal region of genes. The integrator complex provides a quality checkpoint during transcription elongation by driving premature transcription termination of transcripts that are unfavorably configured for transcriptional elongation: the complex terminates transcription by (1) catalyzing dephosphorylation of the C-terminal domain (CTD) of Pol II subunit POLR2A/RPB1 and SUPT5H/SPT5, (2) degrading the exiting nascent RNA transcript via endonuclease activity and (3) promoting the release of Pol II from bound DNA. The integrator complex is also involved in terminating the synthesis of non-coding Pol II transcripts, such as enhancer RNAs (eRNAs), small nuclear RNAs (snRNAs), telomerase RNAs and long non-coding RNAs (lncRNAs). Within the integrator complex, INTS4 acts as an scaffold that links INTS9 and INTS11. Mediates recruitment of cytoplasmic dynein to the nuclear envelope, probably as component of the integrator complex. In Mus musculus (Mouse), this protein is Integrator complex subunit 4 (Ints4).